A 582-amino-acid polypeptide reads, in one-letter code: Protein LYRIC (582 aa).

Residues 1–48 lie on the Lumenal side of the membrane; the sequence is MAARSWQDELAQQAEEGSARLREMLSVGLGFLRTELGLDLGLEPKRYP. The activation of NF-kappa-B stretch occupies residues 1-71; that stretch reads MAARSWQDEL…LLLFLLGYGW (71 aa). A helical transmembrane segment spans residues 49–69; the sequence is GWVILVGTGALGLLLLFLLGY. Residues 70 to 582 lie on the Cytoplasmic side of the membrane; that stretch reads GWAAACAGAR…KKKKKARRET (513 aa). The segment at 72 to 169 is interaction with BCCIP; the sequence is AAACAGARKK…EKSKKNKKKS (98 aa). A disordered region spans residues 78-222; the sequence is ARKKRRSPPR…DSGSLDSTIP (145 aa). Over residues 93–106 the composition is skewed to low complexity; sequence AAVPAAAPDDLALL. The interaction with RELA stretch occupies residues 101–205; sequence DDLALLKNLR…ISHREKRQQR (105 aa). Over residues 109-127 the composition is skewed to basic and acidic residues; the sequence is LRSEEQKKKNRKKLSEKPK. Phosphothreonine is present on Thr143. Over residues 160 to 169 the composition is skewed to basic residues; sequence EKSKKNKKKS. Ser180 is modified (phosphoserine). Positions 198-208 are enriched in basic residues; it reads HREKRQQRKRD. A phosphoserine mark is found at Ser216 and Ser251. The residue at position 264 (Lys264) is an N6-acetyllysine. The interval 280–582 is disordered; it reads TVNGGGWNEK…KKKKKARRET (303 aa). Phosphoserine occurs at positions 298, 306, 308, 311, 323, 339, 344, and 369. Polar residues predominate over residues 320–333; the sequence is SAWSQDTGDANTNG. 2 stretches are compositionally biased toward polar residues: residues 354 to 372 and 383 to 394; these read EPVS…SRNQ and NGLSSADPNSDW. The segment at 381 to 443 is lung-homing for mammary tumors; it reads GLNGLSSADP…EGALPTGKSK (63 aa). Ser415 and Ser426 each carry phosphoserine. Basic and acidic residues predominate over residues 421–434; it reads DDQKVSDDDKEKGE. A compositionally biased stretch (basic residues) spans 441-451; that stretch reads KSKKKKKKKKK. Position 457 is a phosphoserine (Ser457). Residue Thr458 is modified to Phosphothreonine. A phosphoserine mark is found at Ser478, Ser494, and Ser496. 2 stretches are compositionally biased toward polar residues: residues 504–520 and 549–568; these read KNSQ…STEP and NTKQ…SWES. Ser568 bears the Phosphoserine mark. Positions 571–582 are enriched in basic residues; it reads QIKKKKKARRET.

As to quaternary structure, interacts with BCCIP, CREBBP/CBP and RELA/p65. Widely expressed with highest levels in muscle-dominating organs such as skeletal muscle, heart, tongue and small intestine and in endocrine glands such as thyroid and adrenal gland. Overexpressed in various cancers including breast, brain, prostate, melanoma and glioblastoma multiforme.

Its subcellular location is the endoplasmic reticulum membrane. It localises to the nucleus membrane. The protein resides in the cell junction. The protein localises to the tight junction. It is found in the nucleus. Its subcellular location is the nucleolus. It localises to the cytoplasm. The protein resides in the perinuclear region. Its function is as follows. Down-regulates SLC1A2/EAAT2 promoter activity when expressed ectopically. Activates the nuclear factor kappa-B (NF-kappa-B) transcription factor. Promotes anchorage-independent growth of immortalized melanocytes and astrocytes which is a key component in tumor cell expansion. Promotes lung metastasis and also has an effect on bone and brain metastasis, possibly by enhancing the seeding of tumor cells to the target organ endothelium. Induces chemoresistance. The protein is Protein LYRIC (MTDH) of Homo sapiens (Human).